The primary structure comprises 632 residues: Probable potassium transport system protein Kup (632 aa).

A run of 12 helical transmembrane segments spans residues 19 to 39, 57 to 77, 111 to 131, 147 to 167, 175 to 195, 213 to 233, 257 to 277, 286 to 306, 347 to 367, 376 to 396, 404 to 424, and 429 to 449; these read LLCL…PLYV, VIGI…LKYV, ILFL…VITP, PLLQ…LFML, IGAL…LVGL, AFAF…AVVL, WYGG…ALLL, PFFL…ATAA, IYIP…VLGF, AYGV…FFVL, FLLG…FFSA, and VAQG…IMIT.

The protein belongs to the HAK/KUP transporter (TC 2.A.72) family.

The protein resides in the cell inner membrane. The enzyme catalyses K(+)(in) + H(+)(in) = K(+)(out) + H(+)(out). Its function is as follows. Transport of potassium into the cell. Likely operates as a K(+):H(+) symporter. This is Probable potassium transport system protein Kup from Nitrosospira multiformis (strain ATCC 25196 / NCIMB 11849 / C 71).